The primary structure comprises 205 residues: Ribosomal RNA small subunit methyltransferase G (205 aa).

Residues Gly73, Leu78, 124-125 (VE), and Arg138 each bind S-adenosyl-L-methionine.

The protein belongs to the methyltransferase superfamily. RNA methyltransferase RsmG family.

It is found in the cytoplasm. It carries out the reaction guanosine(527) in 16S rRNA + S-adenosyl-L-methionine = N(7)-methylguanosine(527) in 16S rRNA + S-adenosyl-L-homocysteine. Its function is as follows. Specifically methylates the N7 position of guanine in position 527 of 16S rRNA. This chain is Ribosomal RNA small subunit methyltransferase G, found in Actinobacillus pleuropneumoniae serotype 7 (strain AP76).